A 740-amino-acid chain; its full sequence is Catalase-peroxidase (740 aa).

Over residues 1–14 (MTENHDAIVTDAKS) the composition is skewed to basic and acidic residues. The segment at 1 to 21 (MTENHDAIVTDAKSEGSGGCP) is disordered. Positions 108–231 (WHSAGTYRIS…LGAVQMGLIY (124 aa)) form a cross-link, tryptophyl-tyrosyl-methioninium (Trp-Tyr) (with M-257). Catalysis depends on His109, which acts as the Proton acceptor. Residues 231–257 (YVNPEGPNGNPDPIAAARDIRETFRRM) constitute a cross-link (tryptophyl-tyrosyl-methioninium (Tyr-Met) (with W-108)). Residue His272 participates in heme b binding.

The protein belongs to the peroxidase family. Peroxidase/catalase subfamily. As to quaternary structure, homodimer. Requires heme b as cofactor. In terms of processing, formation of the three residue Trp-Tyr-Met cross-link is important for the catalase, but not the peroxidase activity of the enzyme.

It catalyses the reaction H2O2 + AH2 = A + 2 H2O. The catalysed reaction is 2 H2O2 = O2 + 2 H2O. In terms of biological role, bifunctional enzyme with both catalase and broad-spectrum peroxidase activity. The polypeptide is Catalase-peroxidase (Streptomyces reticuli).